The chain runs to 92 residues: Bombyxin A-5 (92 aa).

Positions 1–19 (MKLLLAIALMLTTVMWAST) are cleaved as a signal peptide. Q20 is modified (pyrrolidone carboxylic acid). 3 disulfides stabilise this stretch: C29/C79, C41/C92, and C78/C83. A propeptide spans 50–71 (SDAQFASYGSAWLMPYSEGRDQ) (c peptide like).

Belongs to the insulin family. As to quaternary structure, heterodimer of a B chain and an A chain linked by two disulfide bonds.

The protein localises to the secreted. Brain peptide responsible for activation of prothoracic glands to produce ecdysone in insects. The protein is Bombyxin A-5 (BBXA5) of Bombyx mori (Silk moth).